Reading from the N-terminus, the 75-residue chain is Small ribosomal subunit protein bS21 (75 aa).

Residues 52–75 (RRARKLARKRAQREGLIGGRPGAR) are disordered. Residues 53 to 62 (RARKLARKRA) show a composition bias toward basic residues.

It belongs to the bacterial ribosomal protein bS21 family.

The chain is Small ribosomal subunit protein bS21 from Brucella anthropi (strain ATCC 49188 / DSM 6882 / CCUG 24695 / JCM 21032 / LMG 3331 / NBRC 15819 / NCTC 12168 / Alc 37) (Ochrobactrum anthropi).